We begin with the raw amino-acid sequence, 77 residues long: Small ribosomal subunit protein bS21 (77 aa).

Positions 38 to 52 are enriched in basic and acidic residues; that stretch reads KPSEKRAREKAEAVR. The segment at 38–77 is disordered; it reads KPSEKRAREKAEAVRRTRKLARKRAQREGLISNGRGSPLK. The span at 53-62 shows a compositional bias: basic residues; sequence RTRKLARKRA.

It belongs to the bacterial ribosomal protein bS21 family.

In Bartonella henselae (strain ATCC 49882 / DSM 28221 / CCUG 30454 / Houston 1) (Rochalimaea henselae), this protein is Small ribosomal subunit protein bS21.